Here is a 95-residue protein sequence, read N- to C-terminus: Glutamyl-tRNA(Gln) amidotransferase subunit C (95 aa).

It belongs to the GatC family. In terms of assembly, heterotrimer of A, B and C subunits.

The enzyme catalyses L-glutamyl-tRNA(Gln) + L-glutamine + ATP + H2O = L-glutaminyl-tRNA(Gln) + L-glutamate + ADP + phosphate + H(+). It catalyses the reaction L-aspartyl-tRNA(Asn) + L-glutamine + ATP + H2O = L-asparaginyl-tRNA(Asn) + L-glutamate + ADP + phosphate + 2 H(+). In terms of biological role, allows the formation of correctly charged Asn-tRNA(Asn) or Gln-tRNA(Gln) through the transamidation of misacylated Asp-tRNA(Asn) or Glu-tRNA(Gln) in organisms which lack either or both of asparaginyl-tRNA or glutaminyl-tRNA synthetases. The reaction takes place in the presence of glutamine and ATP through an activated phospho-Asp-tRNA(Asn) or phospho-Glu-tRNA(Gln). This is Glutamyl-tRNA(Gln) amidotransferase subunit C from Rhizobium meliloti (strain 1021) (Ensifer meliloti).